A 448-amino-acid polypeptide reads, in one-letter code: Rhodopsin (448 aa).

The Extracellular segment spans residues Gly-2–Val-33. Asn-8 carries N-linked (GlcNAc...) asparagine glycosylation. Residues Tyr-34–Leu-58 form a helical membrane-spanning segment. At Phe-59–Asn-70 the chain is on the cytoplasmic side. Residues Met-71–Phe-97 traverse the membrane as a helical segment. The Extracellular portion of the chain corresponds to Leu-98–Lys-109. Cysteines 108 and 186 form a disulfide. The helical transmembrane segment at Val-110–Ile-131 threads the bilayer. Residues Asp-132–Arg-151 are Cytoplasmic-facing. A helical transmembrane segment spans residues Ala-152–Phe-172. Topologically, residues Gly-173–Ser-199 are extracellular. A helical transmembrane segment spans residues Asn-200 to Val-224. Over Met-225–Lys-261 the chain is Cytoplasmic. Residues Ile-262–Leu-283 form a helical membrane-spanning segment. At Ala-284–Thr-293 the chain is on the extracellular side. Residues Pro-294 to Tyr-315 form a helical membrane-spanning segment. Lys-305 carries the post-translational modification N6-(retinylidene)lysine. Residues Ser-316 to Ala-448 lie on the Cytoplasmic side of the membrane. S-palmitoyl cysteine attachment occurs at residues Cys-336 and Cys-337. Over residues Glu-343–Thr-352 the composition is skewed to acidic residues. The interval Glu-343 to Ala-448 is disordered. Residues Ser-359–Gln-391 show a composition bias toward low complexity. Residues Gly-392–Pro-437 are compositionally biased toward pro residues.

This sequence belongs to the G-protein coupled receptor 1 family. Opsin subfamily. In terms of processing, contains one covalently linked retinal chromophore. Upon light absorption, the covalently bound 11-cis-retinal is converted to all-trans-retinal. After hydrolysis of the Schiff base and release of the covalently bound all-trans-retinal, active rhodopsin is regenerated by binding of a fresh molecule of 11-cis-retinal. Retina, rhabdomere membrane of photoreceptor cells (at protein level).

It localises to the cell projection. Its subcellular location is the rhabdomere membrane. Photoreceptor required for image-forming vision at low light intensity. Light-induced isomerization of 11-cis to all-trans retinal triggers a conformational change that activates signaling via G-proteins. Signaling mediates the activation of phospholipase C. Subsequent receptor phosphorylation mediates displacement of the bound G-protein alpha subunit by arrestin and terminates signaling. This chain is Rhodopsin (RHO), found in Todarodes pacificus (Japanese flying squid).